A 367-amino-acid polypeptide reads, in one-letter code: tRNA-specific 2-thiouridylase MnmA (367 aa).

ATP-binding positions include 14–21 and leucine 40; that span reads AMSGGVDS. Residue cysteine 108 is the Nucleophile of the active site. Cysteine 108 and cysteine 204 are joined by a disulfide. Glycine 132 contributes to the ATP binding site. Positions 154 to 156 are interaction with tRNA; that stretch reads KDQ. The Cysteine persulfide intermediate role is filled by cysteine 204.

This sequence belongs to the MnmA/TRMU family.

It is found in the cytoplasm. The catalysed reaction is S-sulfanyl-L-cysteinyl-[protein] + uridine(34) in tRNA + AH2 + ATP = 2-thiouridine(34) in tRNA + L-cysteinyl-[protein] + A + AMP + diphosphate + H(+). Its function is as follows. Catalyzes the 2-thiolation of uridine at the wobble position (U34) of tRNA, leading to the formation of s(2)U34. In Rickettsia bellii (strain OSU 85-389), this protein is tRNA-specific 2-thiouridylase MnmA.